A 345-amino-acid polypeptide reads, in one-letter code: Fe-S cluster assembly protein DRE2 (345 aa).

An N-terminal SAM-like domain region spans residues 29–163 (GDSGDRTLLL…KPDYAEQEVV (135 aa)). Residues 164–237 (PLRFGAKKVN…EDTLLTEADL (74 aa)) form a linker region. 4 residues coordinate [2Fe-2S] cluster: Cys247, Cys258, Cys261, and Cys263. A fe-S binding site A region spans residues 247 to 263 (CAPQPGKKRRACKDCTC). [4Fe-4S] cluster is bound by residues Cys308, Cys311, Cys319, and Cys322. Short sequence motifs (cx2C motif) lie at residues 308-311 (CNSC) and 319-322 (CADC). Residues 308–322 (CNSCYLGDAFRCADC) form a fe-S binding site B region.

Belongs to the anamorsin family. Monomer. Interacts with TAH18. Interacts with MIA40. [2Fe-2S] cluster is required as a cofactor. [4Fe-4S] cluster serves as cofactor.

It is found in the cytoplasm. Its subcellular location is the mitochondrion intermembrane space. Functionally, component of the cytosolic iron-sulfur (Fe-S) protein assembly (CIA) machinery required for the maturation of extramitochondrial Fe-S proteins. Part of an electron transfer chain functioning in an early step of cytosolic Fe-S biogenesis, facilitating the de novo assembly of a [4Fe-4S] cluster on the scaffold complex CFD1-NBP35. Electrons are transferred to DRE2 from NADPH via the FAD- and FMN-containing protein TAH18. TAH18-DRE2 are also required for the assembly of the diferric tyrosyl radical cofactor of ribonucleotide reductase (RNR), probably by providing electrons for reduction during radical cofactor maturation in the catalytic small subunit RNR2. The protein is Fe-S cluster assembly protein DRE2 of Podospora anserina (strain S / ATCC MYA-4624 / DSM 980 / FGSC 10383) (Pleurage anserina).